The sequence spans 24 residues: Chaperonin GroEL (24 aa).

It belongs to the chaperonin (HSP60) family. Forms a cylinder of 14 subunits composed of two heptameric rings stacked back-to-back. Interacts with the co-chaperonin GroES.

The protein resides in the cytoplasm. It catalyses the reaction ATP + H2O + a folded polypeptide = ADP + phosphate + an unfolded polypeptide.. In terms of biological role, together with its co-chaperonin GroES, plays an essential role in assisting protein folding. The GroEL-GroES system forms a nano-cage that allows encapsulation of the non-native substrate proteins and provides a physical environment optimized to promote and accelerate protein folding. This chain is Chaperonin GroEL, found in Acinetobacter calcoaceticus.